We begin with the raw amino-acid sequence, 276 residues long: ARL14 effector protein (276 aa).

The segment at 159–183 (QTEFAPESGKREKRKLTKNASASSD) is disordered. Lys176 is covalently cross-linked (Glycyl lysine isopeptide (Lys-Gly) (interchain with G-Cter in SUMO2)). A phosphoserine mark is found at Ser182 and Ser266.

As to quaternary structure, interacts with ARL14 and MYO1E.

The protein resides in the cytoplasm. Its function is as follows. Through its interaction with ARL14 and MYO1E, may connect MHC class II-containing cytoplasmic vesicles to the actin network and hence controls the movement of these vesicles along the actin cytoskeleton in dendritic cells. This chain is ARL14 effector protein (Arl14ep), found in Rattus norvegicus (Rat).